The chain runs to 158 residues: Small ribosomal subunit protein uS9 (158 aa).

Belongs to the universal ribosomal protein uS9 family.

This Nitrobacter winogradskyi (strain ATCC 25391 / DSM 10237 / CIP 104748 / NCIMB 11846 / Nb-255) protein is Small ribosomal subunit protein uS9.